We begin with the raw amino-acid sequence, 758 residues long: Vitamin K-dependent gamma-carboxylase (758 aa).

The tract at residues 1–34 (MAVSARPARAPRGPDKVKKDKAAQTSGPRQGSQM) is disordered. Ala2 carries the post-translational modification N-acetylalanine. The Cytoplasmic segment spans residues 2-60 (AVSARPARAPRGPDKVKKDKAAQTSGPRQGSQMGKLLGFEWTDVSSWERLVTLLNRPTD). Positions 12–22 (RGPDKVKKDKA) are enriched in basic and acidic residues. Polar residues predominate over residues 23–33 (AQTSGPRQGSQ). Residues 61–81 (PASLAVFRFLFGLMMVLDIPQ) form a helical membrane-spanning segment. Residues 82–113 (ERGLSSLDRRYLDGLEVCRFPLLDALQPLPLD) lie on the Lumenal side of the membrane. A disulfide bridge links Cys99 with Cys450. A helical membrane pass occupies residues 114 to 134 (WMYLVYTIMFLGALGMMLGLC). Residues 135–136 (YR) lie on the Cytoplasmic side of the membrane. The helical transmembrane segment at 137 to 157 (ISCVLFLLPYWYVFLLDKTSW) threads the bilayer. The Lumenal segment spans residues 158-292 (NNHSYLYGLL…VSYFHCMNSQ (135 aa)). Residues 293-313 (LFSIGMFPYVMLASSPLFCSP) traverse the membrane as a helical segment. Topologically, residues 314 to 361 (EWPRKLVAHCPKKLQELLPLRTAPQPSTSCMYKRSRARGSQKPGLRHQ) are cytoplasmic. A helical transmembrane segment spans residues 362–382 (LSTAFTLLYLLEQLFLPYSHF). Residues 383-758 (LTQGYNNWTN…PDSHPVHSEF (376 aa)) lie on the Lumenal side of the membrane. A disordered region spans residues 726–758 (RPFEPAGEPSPVNTDSSNPNPPEPDSHPVHSEF). Positions 749–758 (PDSHPVHSEF) are enriched in basic and acidic residues.

Belongs to the vitamin K-dependent gamma-carboxylase family. As to quaternary structure, monomer. May interact with CALU.

The protein localises to the endoplasmic reticulum membrane. It carries out the reaction 4-carboxy-L-glutamyl-[protein] + 2,3-epoxyphylloquinone + H2O + H(+) = phylloquinol + L-glutamyl-[protein] + CO2 + O2. Mediates the vitamin K-dependent carboxylation of glutamate residues to calcium-binding gamma-carboxyglutamate (Gla) residues with the concomitant conversion of the reduced hydroquinone form of vitamin K to vitamin K epoxide. Catalyzes gamma-carboxylation of various proteins, such as blood coagulation factors (F2, F7, F9 and F10), osteocalcin (BGLAP) or matrix Gla protein (MGP). This Ovis aries (Sheep) protein is Vitamin K-dependent gamma-carboxylase (GGCX).